Consider the following 190-residue polypeptide: RNA-binding protein OPG065 (190 aa).

The Z-binding domain maps to 5 to 70 (YIDERSNAEI…DIPPRWFMTT (66 aa)). The 68-residue stretch at 117–184 (NPVTVINEYC…AKLAVDKLLG (68 aa)) folds into the DRBM domain.

This sequence belongs to the orthopoxvirus OPG065 family. As to quaternary structure, interacts with host G1P2/ISG15. Interacts with host EIF2AK2/PKR. Interacts with host ZBP1.

Its function is as follows. RNA-binding protein that plays a role in the inhibition of multiple cellular antiviral responses activated by double-stranded RNA (dsRNA), such as inhibition of PKR activation, necroptosis, and IFN-mediated antiviral activities. Recognizes and binds Z-RNA structures via its Z-binding domain and dsRNA via its DRBM domain: RNA-binding activity is required to escape host ZBP1-dependent necroptosis. Mechanistically, the Z-binding domain binds Z-RNAs that are produced during vaccinia virus infection, thereby competing with Z-RNA detection by host ZBP1, suppressing ZBP1-dependent necroptosis. Acts as a key inhibitor of the interferon response by blocking the phosphorylation and subsequent activation of IRF3 and IRF7 kinases that are required for interferon-alpha gene expression. Inhibits NF-kappa-B activation and the ubiquitin-like protein ISG15, which is an early antiviral protein. The binding with host ISG15 subsequently blocks host ISGylation. The chain is RNA-binding protein OPG065 (OPG065) from Vaccinia virus (strain Western Reserve) (VACV).